We begin with the raw amino-acid sequence, 450 residues long: 23S rRNA (uracil(1939)-C(5))-methyltransferase RlmD (450 aa).

A TRAM domain is found at 12-70 (SKQLSAKLSLNVDQLDHLGAGIAQYQGKVVFIPGALPDETVTVQLTEQKKNYARAKLIK). Residues C83, C89, C92, and C171 each contribute to the [4Fe-4S] cluster site. Residues Q283, F312, N317, E333, D360, and D380 each coordinate S-adenosyl-L-methionine. C406 (nucleophile) is an active-site residue.

The protein belongs to the class I-like SAM-binding methyltransferase superfamily. RNA M5U methyltransferase family. RlmD subfamily.

It carries out the reaction uridine(1939) in 23S rRNA + S-adenosyl-L-methionine = 5-methyluridine(1939) in 23S rRNA + S-adenosyl-L-homocysteine + H(+). Catalyzes the formation of 5-methyl-uridine at position 1939 (m5U1939) in 23S rRNA. The protein is 23S rRNA (uracil(1939)-C(5))-methyltransferase RlmD of Shewanella sp. (strain W3-18-1).